Reading from the N-terminus, the 572-residue chain is SHUGOSHIN 1 (572 aa).

Positions 59 to 110 form a coiled coil; that stretch reads KHQQQAILISSKENAENLQKENTKLMKVVMERDGIKSDLKKLRIEFQKVQEQ. Disordered regions lie at residues 185-221, 244-285, 333-352, and 484-572; these read DADH…PANS, KLVS…QTET, ARLK…SIET, and SRRQ…RGGF. Polar residues predominate over residues 192–201; it reads SGSSNANSLQ. 4 stretches are compositionally biased toward basic and acidic residues: residues 244–257, 336–352, 523–542, and 552–572; these read KLVS…ENHI, KSQE…SIET, ELKR…EMRK, and AAEK…RGGF.

The protein belongs to the shugoshin family.

Functionally, protects sister chromatid centromere cohesion in meiosis I but not through the protection of the cohesin SYN1. Required with SGO2 for full protection of centromeric cohesion during anaphase I. Required to prevent precocious release of pericentromeric cohesins during meiosis. Not necessary for the maintenance of the synaptonemal complex (SC). Not required for monopolar spindle orientation in meiosis I. The protein is SHUGOSHIN 1 of Arabidopsis thaliana (Mouse-ear cress).